The chain runs to 309 residues: Serine/threonine-protein phosphatase 2A catalytic subunit beta isoform (309 aa).

Residues Asp57, His59, Asp85, and Asn117 each coordinate Mn(2+). Catalysis depends on His118, which acts as the Proton donor. 2 residues coordinate Mn(2+): His167 and His241. Tyr307 carries the phosphotyrosine modification. Residue Leu309 is modified to Leucine methyl ester.

The protein belongs to the PPP phosphatase family. PP-1 subfamily. As to quaternary structure, PP2A consists of a common heterodimeric core enzyme (composed of a 36 kDa catalytic subunit (subunit C) and a 65 kDa constant regulatory subunit (PR65) (subunit A)) that associates with a variety of regulatory subunits. Proteins that associate with the core dimer include three families of regulatory subunits B (the R2/B/PR55/B55, R3/B''/PR72/PR130/PR59 and R5/B'/B56 families), the 48 kDa variable regulatory subunit, viral proteins, and cell signaling molecules. Binds PPME1. May indirectly interact with SGO1, most probably through regulatory B56 subunits. Interacts with CTTNBP2NL. Interacts with PTPA. Found in a complex with at least ARL2, PPP2CB, PPP2R1A, PPP2R2A, PPP2R5E and TBCD. Interacts with TBCD. Part of the core of STRIPAK complexes composed of PP2A catalytic and scaffolding subunits, the striatins (PP2A regulatory subunits), the striatin-associated proteins MOB4, STRIP1 and STRIP2, PDCD10 and members of the STE20 kinases, such as STK24 and STK26. The cofactor is Mn(2+). Post-translationally, reversibly methyl esterified on Leu-309 by leucine carboxyl methyltransferase 1 (Lcmt1) and protein phosphatase methylesterase 1 (Ppme1). Carboxyl methylation influences the affinity of the catalytic subunit for the different regulatory subunits, thereby modulating the PP2A holoenzyme's substrate specificity, enzyme activity and cellular localization. In terms of processing, phosphorylation of either threonine (by autophosphorylation-activated protein kinase) or tyrosine results in inactivation of the phosphatase. Auto-dephosphorylation has been suggested as a mechanism for reactivation. May be monoubiquitinated by NOSIP.

It localises to the cytoplasm. The protein localises to the nucleus. The protein resides in the chromosome. Its subcellular location is the centromere. It is found in the cytoskeleton. It localises to the spindle pole. It carries out the reaction O-phospho-L-seryl-[protein] + H2O = L-seryl-[protein] + phosphate. The catalysed reaction is O-phospho-L-threonyl-[protein] + H2O = L-threonyl-[protein] + phosphate. Catalytic subunit of protein phosphatase 2A (PP2A), a serine/threonine phosphatase involved in the regulation of a wide variety of enzymes, signal transduction pathways, and cellular events. PP2A can modulate the activity of phosphorylase B kinase, casein kinase 2, mitogen-stimulated S6 kinase, and MAP-2 kinase. Part of the striatin-interacting phosphatase and kinase (STRIPAK) complexes. STRIPAK complexes have critical roles in protein (de)phosphorylation and are regulators of multiple signaling pathways including Hippo, MAPK, nuclear receptor and cytoskeleton remodeling. Different types of STRIPAK complexes are involved in a variety of biological processes such as cell growth, differentiation, apoptosis, metabolism and immune regulation. This chain is Serine/threonine-protein phosphatase 2A catalytic subunit beta isoform (Ppp2cb), found in Mus musculus (Mouse).